A 209-amino-acid chain; its full sequence is Large ribosomal subunit protein uL3 (209 aa).

Residues 144-165 (GSMGAASDPSRTFKNKKMPGHM) are disordered.

This sequence belongs to the universal ribosomal protein uL3 family. In terms of assembly, part of the 50S ribosomal subunit. Forms a cluster with proteins L14 and L19.

In terms of biological role, one of the primary rRNA binding proteins, it binds directly near the 3'-end of the 23S rRNA, where it nucleates assembly of the 50S subunit. This chain is Large ribosomal subunit protein uL3, found in Clostridium novyi (strain NT).